A 234-amino-acid chain; its full sequence is MEKEKFQQKALKQTKQKKSKSAEFLMVKEERAATEGIENPAFNISSTDLSAYQTSEEEVIRHDKLHSTLAAHQQKLRLQAHAEPRGNEYSRNYFDLLMDEEINPRQCGMEVSEEDPVKFQEQILYGKLMKLLDEASKIIDSQVPVTGEDFSDSVMPVSFSKTRDLHRELGDEAIPSYIEQFEREVQNDIIMFGSFSLEQDSKHHKEASHHNKKNCNPGFMSSFKDREASRWQQR.

Disordered regions lie at residues 1–21 (MEKE…KSKS) and 201–234 (SKHH…WQQR). The segment covering 202 to 213 (KHHKEASHHNKK) has biased composition (basic residues). Basic and acidic residues predominate over residues 223-234 (FKDREASRWQQR).

The protein is Orofacial cleft 1 candidate gene 1 protein homolog (OFCC1) of Gallus gallus (Chicken).